The sequence spans 175 residues: Protein-export protein SecB (175 aa).

It belongs to the SecB family. Homotetramer, a dimer of dimers. One homotetramer interacts with 1 SecA dimer.

The protein resides in the cytoplasm. One of the proteins required for the normal export of preproteins out of the cell cytoplasm. It is a molecular chaperone that binds to a subset of precursor proteins, maintaining them in a translocation-competent state. It also specifically binds to its receptor SecA. The sequence is that of Protein-export protein SecB from Ehrlichia chaffeensis (strain ATCC CRL-10679 / Arkansas).